The following is a 426-amino-acid chain: D-tagatose-1,6-bisphosphate aldolase subunit KbaZ (426 aa).

It belongs to the GatZ/KbaZ family. KbaZ subfamily. Forms a complex with KbaY.

The protein operates within carbohydrate metabolism; D-tagatose 6-phosphate degradation; D-glyceraldehyde 3-phosphate and glycerone phosphate from D-tagatose 6-phosphate: step 2/2. Its function is as follows. Component of the tagatose-1,6-bisphosphate aldolase KbaYZ that is required for full activity and stability of the Y subunit. Could have a chaperone-like function for the proper and stable folding of KbaY. When expressed alone, KbaZ does not show any aldolase activity. This is D-tagatose-1,6-bisphosphate aldolase subunit KbaZ from Escherichia coli O157:H7.